The primary structure comprises 269 residues: Centromere protein K (269 aa).

A compositionally biased stretch (acidic residues) spans 1–10; that stretch reads MNQEDLDPDS. Positions 1–20 are disordered; sequence MNQEDLDPDSTTDVGDVTNT. Coiled coils occupy residues 22–42 and 98–151; these read EELI…QNKL and QKLR…NKVE.

This sequence belongs to the CENP-K/MCM22 family. In terms of assembly, component of the CENPA-CAD complex, composed of CENPI, CENPK, CENPL, CENPO, CENPP, CENPQ, CENPR and CENPS. The CENPA-CAD complex interacts with the CENPA-NAC complex, at least composed of CENPA, CENPC, CENPH, CENPM, CENPN, CENPT and CENPU. Interacts directly with CENPH. In terms of tissue distribution, detected in several fetal organs with highest levels in fetal liver. In adults, it is weakly expressed in lung and placenta.

It is found in the nucleus. Its subcellular location is the chromosome. It localises to the centromere. The protein localises to the kinetochore. In terms of biological role, component of the CENPA-CAD (nucleosome distal) complex, a complex recruited to centromeres which is involved in assembly of kinetochore proteins, mitotic progression and chromosome segregation. May be involved in incorporation of newly synthesized CENPA into centromeres via its interaction with the CENPA-NAC complex. Acts in coordination with KNL1 to recruit the NDC80 complex to the outer kinetochore. This is Centromere protein K (CENPK) from Homo sapiens (Human).